Reading from the N-terminus, the 118-residue chain is MLDSIKQKKNSKRIKMRIKTGDLVKVINGKEKGKTGEVLKTIPLENRVVVKGINLRTKHVKPTQEGESGRILTEEASLHASNVMFFSKDKNIVSKIEFFIDKEGVKKRKLKKTGELID.

It belongs to the universal ribosomal protein uL24 family. As to quaternary structure, part of the 50S ribosomal subunit.

In terms of biological role, one of two assembly initiator proteins, it binds directly to the 5'-end of the 23S rRNA, where it nucleates assembly of the 50S subunit. One of the proteins that surrounds the polypeptide exit tunnel on the outside of the subunit. The sequence is that of Large ribosomal subunit protein uL24 from Prochlorococcus marinus (strain MIT 9515).